A 143-amino-acid polypeptide reads, in one-letter code: Large ribosomal subunit protein bL17 (143 aa).

Residues 124 to 133 (GAGDRARLEA) are compositionally biased toward basic and acidic residues. The tract at residues 124-143 (GAGDRARLEAEGTDAEAAAA) is disordered.

Belongs to the bacterial ribosomal protein bL17 family. In terms of assembly, part of the 50S ribosomal subunit. Contacts protein L32.

The protein is Large ribosomal subunit protein bL17 of Mesorhizobium japonicum (strain LMG 29417 / CECT 9101 / MAFF 303099) (Mesorhizobium loti (strain MAFF 303099)).